The primary structure comprises 145 residues: NADH dehydrogenase [ubiquinone] 1 alpha subcomplex subunit 12 (145 aa).

Met-1 is modified (N-acetylmethionine).

This sequence belongs to the complex I NDUFA12 subunit family. Complex I is composed of 45 different subunits.

The protein localises to the mitochondrion inner membrane. Functionally, accessory subunit of the mitochondrial membrane respiratory chain NADH dehydrogenase (Complex I), that is believed not to be involved in catalysis. Complex I functions in the transfer of electrons from NADH to the respiratory chain. The immediate electron acceptor for the enzyme is believed to be ubiquinone. The chain is NADH dehydrogenase [ubiquinone] 1 alpha subcomplex subunit 12 (NDUFA12) from Bos taurus (Bovine).